The chain runs to 351 residues: Anthranilate phosphoribosyltransferase (351 aa).

5-phospho-alpha-D-ribose 1-diphosphate is bound by residues G80, 83–84 (GD), T88, 90–93 (NIST), 108–116 (KHGNRSVTS), and S120. G80 is an anthranilate binding site. S92 is a binding site for Mg(2+). An anthranilate-binding site is contributed by N111. R166 serves as a coordination point for anthranilate. Residues D229 and E230 each contribute to the Mg(2+) site.

It belongs to the anthranilate phosphoribosyltransferase family. As to quaternary structure, homodimer. The cofactor is Mg(2+).

It catalyses the reaction N-(5-phospho-beta-D-ribosyl)anthranilate + diphosphate = 5-phospho-alpha-D-ribose 1-diphosphate + anthranilate. It functions in the pathway amino-acid biosynthesis; L-tryptophan biosynthesis; L-tryptophan from chorismate: step 2/5. Its function is as follows. Catalyzes the transfer of the phosphoribosyl group of 5-phosphorylribose-1-pyrophosphate (PRPP) to anthranilate to yield N-(5'-phosphoribosyl)-anthranilate (PRA). This Chlorobium phaeovibrioides (strain DSM 265 / 1930) (Prosthecochloris vibrioformis (strain DSM 265)) protein is Anthranilate phosphoribosyltransferase.